The following is a 136-amino-acid chain: Large ribosomal subunit protein uL16 (136 aa).

Belongs to the universal ribosomal protein uL16 family. As to quaternary structure, part of the 50S ribosomal subunit.

Functionally, binds 23S rRNA and is also seen to make contacts with the A and possibly P site tRNAs. In Pseudoalteromonas atlantica (strain T6c / ATCC BAA-1087), this protein is Large ribosomal subunit protein uL16.